A 773-amino-acid polypeptide reads, in one-letter code: Ribosomal protein S6 kinase alpha-4 (773 aa).

The region spanning F33 to F301 is the Protein kinase 1 domain. ATP-binding positions include L39 to V47 and K65. D161 serves as the catalytic Proton acceptor. Position 196 is a phosphoserine; by autocatalysis (S196). One can recognise an AGC-kinase C-terminal domain in the interval Q302 to N371. The residue at position 343 (S343) is a Phosphoserine; by MAPK1, MAPK3 and MAPK14. S347 carries the post-translational modification Phosphoserine. Phosphoserine; by autocatalysis is present on residues S360 and S365. Residues L417–C425 and K440 each bind ATP. The Protein kinase 2 domain occupies L417–L674. The active-site Proton acceptor is D530. A Phosphothreonine modification is found at T542. Residue T568 is modified to Phosphothreonine; by MAPK1, MAPK3 and MAPK14. A phosphoserine mark is found at S634 and S678. 2 disordered regions span residues L674–P696 and A728–S773. Residue T687 is modified to Phosphothreonine. Phosphoserine; by autocatalysis is present on residues S737 and S745.

Belongs to the protein kinase superfamily. AGC Ser/Thr protein kinase family. S6 kinase subfamily. In terms of assembly, forms a complex with either MAPK1/ERK2 or MAPK3/ERK1 in quiescent cells which transiently dissociates following mitogenic stimulation. Also associates with MAPK14/p38-alpha. Activated RPS6KA4 associates with and phosphorylates the NF-kappa-B p65 subunit RELA. Mg(2+) is required as a cofactor. Ser-343 and Thr-568 phosphorylation is required for kinase activity. Ser-343 and Ser-196 are autophosphorylated by the C-terminal kinase domain, and their phosphorylation is essential for the catalytic activity of the N-terminal kinase domain. Phosphorylated at Ser-343, Thr-568 and Thr-687 by MAPK1/ERK2, MAPK3/ERK1 and MAPK14/p38-alpha. Autophosphorylated at Ser-737 and Ser-745 by the N-terminal kinase domain.

The protein localises to the nucleus. The enzyme catalyses L-seryl-[protein] + ATP = O-phospho-L-seryl-[protein] + ADP + H(+). It catalyses the reaction L-threonyl-[protein] + ATP = O-phospho-L-threonyl-[protein] + ADP + H(+). Activated by phosphorylation at Ser-343, Thr-568 and Thr-687 by MAPK1/ERK2, MAPK3/ERK1 and MAPK14/p38-alpha, and by further autophosphorylation of Ser-196, Ser-360 and Ser-365 by the activated C-terminal kinase domain. Functionally, serine/threonine-protein kinase that is required for the mitogen or stress-induced phosphorylation of the transcription factors CREB1 and ATF1 and for the regulation of the transcription factor RELA, and that contributes to gene activation by histone phosphorylation and functions in the regulation of inflammatory genes. Phosphorylates CREB1 and ATF1 in response to mitogenic or stress stimuli such as UV-C irradiation, epidermal growth factor (EGF) and anisomycin. Plays an essential role in the control of RELA transcriptional activity in response to TNF. Phosphorylates 'Ser-10' of histone H3 in response to mitogenics, stress stimuli and EGF, which results in the transcriptional activation of several immediate early genes, including proto-oncogenes c-fos/FOS and c-jun/JUN. May also phosphorylate 'Ser-28' of histone H3. Mediates the mitogen- and stress-induced phosphorylation of high mobility group protein 1 (HMGN1/HMG14). In lipopolysaccharide-stimulated primary macrophages, acts downstream of the Toll-like receptor TLR4 to limit the production of pro-inflammatory cytokines. Functions probably by inducing transcription of the MAP kinase phosphatase DUSP1 and the anti-inflammatory cytokine interleukin 10 (IL10), via CREB1 and ATF1 transcription factors. This is Ribosomal protein S6 kinase alpha-4 (Rps6ka4) from Mus musculus (Mouse).